Reading from the N-terminus, the 89-residue chain is SADLALGKQTFEANCAACHAGGNNSVIPDHTLRKAAMEQFLQGGFNLEAITYQVENGKGAMPAWSGTLDDDEIAAVAAYVYDQASGDKW.

Heme c is bound by residues cysteine 15, cysteine 18, histidine 19, and methionine 61.

The protein belongs to the cytochrome c family. PetJ subfamily. Monomer. In terms of processing, binds 1 heme c group covalently per subunit.

It is found in the plastid. The protein localises to the chloroplast thylakoid lumen. Functions as an electron carrier between membrane-bound cytochrome b6-f and photosystem I in oxygenic photosynthesis. This Tetradesmus obliquus (Green alga) protein is Cytochrome c6 (petJ).